The chain runs to 708 residues: uncharacterized protein (708 aa).

Disordered regions lie at residues 1 to 79, 119 to 301, 349 to 390, and 410 to 461; these read MHAR…RRSS, AGEF…IHQR, YLSH…GDEN, and SNSF…KRQR. The segment covering 65 to 74 has biased composition (pro residues); that stretch reads LPPPLPPPPV. The segment covering 238 to 249 has biased composition (polar residues); that stretch reads DEAQSKTGSSSA. A compositionally biased stretch (low complexity) spans 260–274; sequence SKVSEGSSSLSAGSG. Residues 410-419 are compositionally biased toward polar residues; the sequence is SNSFPSSILR. The segment covering 442–461 has biased composition (basic and acidic residues); it reads VGEKRPGEGSDLEEGSKRQR.

This is an uncharacterized protein from Arabidopsis thaliana (Mouse-ear cress).